The following is a 116-amino-acid chain: Selenoprotein H (116 aa).

K20 carries the N6-acetyllysine modification. Positions 35-38 form a cross-link, cysteinyl-selenocysteine (Cys-Sec); redox-active; sequence CTSU. A non-standard amino acid (selenocysteine) is located at residue U38.

The protein belongs to the SelWTH family.

Functionally, may be involved in a redox-related process. The protein is Selenoprotein H of Mus musculus (Mouse).